The chain runs to 112 residues: MKSLLFTLAVFMLLAQLVSGNWYVKKCLNDVGICKKKCKPEELHVKNGRAMCGKQRDCCVPADKRANYPAFCVQTKTTRTSTVTATAATTTTLVMTTASMSSMAPTPVSPTS.

An N-terminal signal peptide occupies residues 1–20; that stretch reads MKSLLFTLAVFMLLAQLVSG. Residues 21–63 form an in vitro binds to LPS, mediates antimicrobial activity and inhibits LPS-mediated inflammation region; the sequence is NWYVKKCLNDVGICKKKCKPEELHVKNGRAMCGKQRDCCVPAD. 3 disulfide bridges follow: Cys27/Cys58, Cys34/Cys52, and Cys38/Cys59.

Belongs to the beta-defensin family. Homodimer or homooligomer; disulfide-linked. In terms of processing, O-glycosylated; glycans contain alpha(2,3)-linked sialic acids.

The protein resides in the secreted. Highly glycosylated atypical beta-defensin involved in several aspects of sperm function. Facilitates sperm transport in the female reproductive tract and contributes to sperm protection against immunodetection; both functions are probably implicating the negative surface charge provided by its O-linked oligosaccharides in the sperm glycocalyx. Involved in binding of sperm to oviductal epithelial cells to form a sperm reservoir until ovulation. Release from the sperm surface during capacitation and ovaluation by an elevation of oviductal fluid pH is unmasking other surface components and allows sperm to penetrate the cumulus matrix and bind to the zona pellucida of the oocyte. In vitro has antimicrobial activity and may inhibit LPS-mediated inflammation. In Hylobates lar (Lar gibbon), this protein is Beta-defensin 126 (DEFB126).